Consider the following 206-residue polypeptide: Ribosomal RNA small subunit methyltransferase G (206 aa).

Residues Gly73, Leu78, 124–125, and Arg139 each bind S-adenosyl-L-methionine; that span reads VE.

Belongs to the methyltransferase superfamily. RNA methyltransferase RsmG family.

Its subcellular location is the cytoplasm. It catalyses the reaction guanosine(527) in 16S rRNA + S-adenosyl-L-methionine = N(7)-methylguanosine(527) in 16S rRNA + S-adenosyl-L-homocysteine. In terms of biological role, specifically methylates the N7 position of guanine in position 527 of 16S rRNA. In Photobacterium profundum (strain SS9), this protein is Ribosomal RNA small subunit methyltransferase G.